Consider the following 421-residue polypeptide: ATP-dependent RNA helicase RhlB (421 aa).

The short motif at 9–37 is the Q motif element; sequence QKFSDFALHPKVVEALEKKGFHNCTPIQA. Residues 40-219 enclose the Helicase ATP-binding domain; it reads LPLTLAGRDV…FEQMNNAEYI (180 aa). Position 53–60 (53–60) interacts with ATP; that stretch reads AQTGTGKT. A DEAD box motif is present at residues 165-168; the sequence is DEAD. Positions 245–390 constitute a Helicase C-terminal domain; the sequence is RLLQTLIEEE…VSKYNPDALM (146 aa). A disordered region spans residues 395–421; sequence KPLRLTRARTGNGPRRTGAPRNRRRSG. Low complexity predominate over residues 402–414; the sequence is ARTGNGPRRTGAP.

It belongs to the DEAD box helicase family. RhlB subfamily. As to quaternary structure, component of the RNA degradosome, which is a multiprotein complex involved in RNA processing and mRNA degradation.

The protein resides in the cytoplasm. It catalyses the reaction ATP + H2O = ADP + phosphate + H(+). DEAD-box RNA helicase involved in RNA degradation. Has RNA-dependent ATPase activity and unwinds double-stranded RNA. This chain is ATP-dependent RNA helicase RhlB, found in Shigella flexneri serotype 5b (strain 8401).